Reading from the N-terminus, the 367-residue chain is MATAAASDLESKAKAAFVDDDFELAAELYTQAIEASPATAELYADRAQAHIKLGNYTEAVADANKAIELDPSMHKAYLRKGAACIRLEEYQTAKAALELGYSFASGDSRFTRLMKECDERIAEELSEVPVKKAEDGAAAPSVASFVEEKDDAANMDNTPPMVEVKPKYRHDFYNSATEVVLTIFAKGVPAENVVVDFGEQMLSVSIEVPGEEPYHFQPRLFSKIIPEKSRYQVLSTKVEIRLAKAEQITWTSLDYDKKPKAVPQKIIPPAESAQRPSYPSSKSKKDWDKLEAEVKKEEKEEKLEGDAALNKFFRDIYSDADEDMRRAMMKSFVESNGTVLSTNWKDVGSKKVEGSPPDGMELKKWEY.

TPR repeat units lie at residues 6–39, 40–73, and 75–107; these read ASDL…SPAT, AELY…DPSM, and KAYL…ASGD. The CS domain occupies 165–254; the sequence is KPKYRHDFYN…AEQITWTSLD (90 aa). Disordered regions lie at residues 261-289 and 347-367; these read AVPQ…DWDK and VGSK…KWEY. Residues 277 to 367 enclose the SGS domain; the sequence is SYPSSKSKKD…DGMELKKWEY (91 aa).

This sequence belongs to the SGT1 family. As to quaternary structure, interacts (via CS domain) with RAR1 (via CHORD 2 domain). Interacts with RAD6. Expressed in roots, root tips, shoot apical meristem (SAM), young leaves, flag leaves and ears.

It is found in the cytoplasm. Its subcellular location is the nucleus. Functionally, involved in basal disease resistance to bacterial blight (X.oryzae). May act as positive regulator of basal defense. Probably required for SCF-mediated ubiquitination, by coupling HSP90 to SCF complex for ubiquitination of HSP90 client proteins. The sequence is that of Protein SGT1 homolog from Oryza sativa subsp. japonica (Rice).